A 176-amino-acid polypeptide reads, in one-letter code: MLQFLNRCSRGRGAWLLMALTAFLLELTALYFQHIMLLQPCVMCIYERVALFGILGASLLGAIAPRSPLRYLAIAVWIYSAWKGVQLAWAHTMLQLNPSPFNTCDFFVNFPSWLPLDKWLPAVFAASGDCSERQWQFMSLEMPQWLVGIFAAYLVIAVLVLISQFVKPKRRDLFGR.

Topologically, residues 1–14 (MLQFLNRCSRGRGA) are cytoplasmic. The helical transmembrane segment at 15–31 (WLLMALTAFLLELTALY) threads the bilayer. At 32–49 (FQHIMLLQPCVMCIYERV) the chain is on the periplasmic side. Cys-41 and Cys-44 are joined by a disulfide. Residues 50–65 (ALFGILGASLLGAIAP) traverse the membrane as a helical segment. Residues 66 to 71 (RSPLRY) are Cytoplasmic-facing. Residues 72-89 (LAIAVWIYSAWKGVQLAW) traverse the membrane as a helical segment. The Periplasmic segment spans residues 90–144 (AHTMLQLNPSPFNTCDFFVNFPSWLPLDKWLPAVFAASGDCSERQWQFMSLEMPQ). Cys-104 and Cys-130 form a disulfide bridge. A helical transmembrane segment spans residues 145–163 (WLVGIFAAYLVIAVLVLIS). Over 164 to 176 (QFVKPKRRDLFGR) the chain is Cytoplasmic.

The protein belongs to the DsbB family.

The protein resides in the cell inner membrane. Required for disulfide bond formation in some periplasmic proteins. Acts by oxidizing the DsbA protein. This is Disulfide bond formation protein B from Yersinia pestis bv. Antiqua (strain Nepal516).